A 267-amino-acid chain; its full sequence is NAD kinase 2 (267 aa).

Asp-52 (proton acceptor) is an active-site residue. Residues 52-53 (DA), 124-125 (NE), Arg-151, Asp-153, 164-169 (TAYNKS), and Ala-188 each bind NAD(+).

It belongs to the NAD kinase family. It depends on a divalent metal cation as a cofactor.

The protein resides in the cytoplasm. The enzyme catalyses NAD(+) + ATP = ADP + NADP(+) + H(+). Its function is as follows. Involved in the regulation of the intracellular balance of NAD and NADP, and is a key enzyme in the biosynthesis of NADP. Catalyzes specifically the phosphorylation on 2'-hydroxyl of the adenosine moiety of NAD to yield NADP. This Bacillus cereus (strain ATCC 14579 / DSM 31 / CCUG 7414 / JCM 2152 / NBRC 15305 / NCIMB 9373 / NCTC 2599 / NRRL B-3711) protein is NAD kinase 2.